The primary structure comprises 563 residues: Arginine--tRNA ligase (563 aa).

A 'HIGH' region motif is present at residues 120-130 (PNIAKPFHIGH).

It belongs to the class-I aminoacyl-tRNA synthetase family. As to quaternary structure, monomer.

The protein resides in the cytoplasm. It catalyses the reaction tRNA(Arg) + L-arginine + ATP = L-arginyl-tRNA(Arg) + AMP + diphosphate. The chain is Arginine--tRNA ligase from Clostridium botulinum (strain 657 / Type Ba4).